The following is a 72-amino-acid chain: Large ribosomal subunit protein uL30 (72 aa).

Belongs to the universal ribosomal protein uL30 family. As to quaternary structure, part of the 50S ribosomal subunit.

This chain is Large ribosomal subunit protein uL30, found in Mycobacterium ulcerans (strain Agy99).